The sequence spans 161 residues: Zinc finger protein KNUCKLES (161 aa).

The segment at 1 to 33 (MAEPPPSYLHFVGPAKTRSSSKRHSFSSSAHPA) is disordered. The segment at 38 to 60 (FPCQYCPRKFYTSQALGGHQNAH) adopts a C2H2-type zinc-finger fold. The interval 142-161 (GGNGVMEEDEPLDLDLSLRL) is disordered. Positions 155–159 (LDLSL) match the EAR-like (transcriptional repression) motif.

In terms of tissue distribution, first expressed in developing carpel primordia, and later in stamens and ovules of flower buds.

The protein resides in the nucleus. May function as a transcriptional repressor of cellular proliferation that regulates floral determinacy and relative size of basal pattern elements along the proximo-distal axis of the developing gynoecium. In Arabidopsis thaliana (Mouse-ear cress), this protein is Zinc finger protein KNUCKLES (KNU).